Here is a 359-residue protein sequence, read N- to C-terminus: 4-galactosyl-N-acetylglucosaminide 3-alpha-L-fucosyltransferase FUT6 (359 aa).

Residues 1–14 (MDPLGPAKPQWSWR) lie on the Cytoplasmic side of the membrane. A helical; Signal-anchor for type II membrane protein transmembrane segment spans residues 15 to 34 (CCLTTLLFQLLVAVCFFSYL). The Lumenal portion of the chain corresponds to 35-359 (RVSRDDPTVY…QTRSIAAWFT (325 aa)). 4 N-linked (GlcNAc...) asparagine glycosylation sites follow: Asn46, Asn91, Asn153, and Asn184. Residues 73 to 112 (KPIALPRCSEMVPGTADCNITADRKVYPQADAVIVHHREV) are determines site-specific fucosylation.

Belongs to the glycosyltransferase 10 family. As to quaternary structure, homodimer and monomer. Monomer (secreted form). Post-translationally, N-glycosylated. Proteolytic cleavage releases a secreted glycoform of 43 kDa.

It is found in the golgi apparatus. The protein localises to the golgi stack membrane. It localises to the secreted. It catalyses the reaction a beta-D-galactosyl-(1-&gt;4)-N-acetyl-beta-D-glucosaminyl derivative + GDP-beta-L-fucose = a beta-D-galactosyl-(1-&gt;4)-[alpha-L-fucosyl-(1-&gt;3)]-N-acetyl-beta-D-glucosaminyl derivative + GDP + H(+). It carries out the reaction an N-acetyl-alpha-neuraminyl-(2-&gt;3)-beta-D-galactosyl-(1-&gt;4)-N-acetyl-beta-D-glucosaminyl derivative + GDP-beta-L-fucose = an alpha-Neu5Ac-(2-&gt;3)-beta-D-Gal-(1-&gt;4)-[alpha-L-Fuc-(1-&gt;3)]-beta-D-GlcNAc derivative + GDP + H(+). The enzyme catalyses an alpha-Neu5Ac-(2-&gt;3)-beta-D-Gal-(1-&gt;4)-beta-D-GlcNAc-(1-&gt;3)-beta-D-Gal-(1-&gt;4)-[alpha-L-Fuc-(1-&gt;3)]-beta-D-GlcNAc derivative + GDP-beta-L-fucose = an alpha-Neu5Ac-(2-&gt;3)-beta-D-Gal-(1-&gt;4)-[alpha-L-Fuc-(1-&gt;3)]-beta-D-GlcNAc-(1-&gt;3)-beta-D-Gal-(1-&gt;4)-[alpha-L-Fuc-(1-&gt;3)]-beta-D-GlcNAc derivative + GDP + H(+). The catalysed reaction is a neolactoside nLc6Cer + GDP-beta-L-fucose = beta-D-Gal-(1-&gt;4)-[alpha-L-Fuc-(1-&gt;3)]-beta-D-GlcNAc-(1-&gt;3)-beta-D-Gal-(1-&gt;4)-beta-D-GlcNAc-(1-&gt;3)-beta-D-Gal-(1-&gt;4)-beta-D-Glc-(1&lt;-&gt;1')-Cer + GDP + H(+). It catalyses the reaction a neolactoside nLc6Cer + GDP-beta-L-fucose = beta-D-galactosyl-(1-&gt;4)-N-acetyl-beta-D-glucosaminyl-(1-&gt;3)-beta-D-galactosyl-(1-&gt;4)-[alpha-L-fucosyl-(1-&gt;3)]-N-acetyl-beta-D-glucosaminyl-(1-&gt;3)-beta-D-galactosyl-(1-&gt;4)-beta-D-glucosyl-(1&lt;-&gt;1')-ceramide + GDP + H(+). It carries out the reaction a neolactoside VI(3)-alpha-NeuNAc-nLc6Cer + GDP-beta-L-fucose = a neolactoside VI(3)-alpha-NeuAc,V(3)-alphaFuc-nLc6Cer + GDP + H(+). The enzyme catalyses beta-D-galactosyl-(1-&gt;4)-N-acetyl-D-glucosamine + GDP-beta-L-fucose = beta-D-galactosyl-(1-&gt;4)-[alpha-L-fucosyl-(1-&gt;3)]-N-acetyl-D-glucosamine + GDP + H(+). The catalysed reaction is N-acetyl-alpha-neuraminosyl-(2-&gt;3)-beta-D-galactosyl-(1-&gt;4)-N-acetyl-beta-D-glucosamine + GDP-beta-L-fucose = N-acetyl-alpha-neuraminosyl-(2-&gt;3)-beta-D-galactosyl-(1-&gt;4)-[alpha-L-fucosyl-(1-&gt;3)]-N-acetyl-beta-D-glucosamine + GDP + H(+). It catalyses the reaction lactose + GDP-beta-L-fucose = beta-D-galactosyl-(1-&gt;4)-[alpha-L-fucosyl-(1-&gt;3)]-D-glucose + GDP + H(+). It carries out the reaction alpha-L-Fuc-(1-&gt;2)-beta-D-Gal-(1-&gt;4)-D-Glc + GDP-beta-L-fucose = alpha-L-Fuc-(1-&gt;2)-beta-D-Gal-(1-&gt;4)-[alpha-L-Fuc-(1-&gt;3)]-D-Glc + GDP + H(+). The enzyme catalyses a beta-D-galactosyl-(1-&gt;4)-N-acetyl-beta-D-6-sulfooxy-glucosaminyl derivative + GDP-beta-L-fucose = a beta-D-galactosyl-(1-&gt;4)-[alpha-L-fucosyl-(1-&gt;3)]-N-acetyl-beta-D-6-sulfooxy-glucosaminyl derivative + GDP + H(+). Its pathway is protein modification; protein glycosylation. Catalyzes the transfer of L-fucose, from a guanosine diphosphate-beta-L-fucose, to the N-acetyl glucosamine (GlcNAc) of a distal alpha2,3 sialylated lactosamine unit of a glycoprotein- or glycolipid-linked sialopolylactosamines chain or of a distal or internal lactosamine unit of a neutral glycoprotein- or glycolipid-linked polylactosamines chain through an alpha-1,3 glycosidic linkage and participates in surface expression of the sialyl Lewis X (sLe(x)), Lewis X (Le(x)) and non sialylated VIM2 determinants. Moreover transfers fucose to H-type 2 (Fucalpha1-2Galbeta1-4GlcNAc) chain acceptor substrates and participates in difucosylated sialyl Lewis x determinants. Also fucosylates a polylactosamine substrate having a 6 sulfate modification at the GlcNAc moiety and gives rise to sialyl and non-sialyl 6-sulfo lewis X. Does not have activity towards type 1 ((Galbeta1-3GlcNAc)) and H-type 1 chain (Fucalpha1-2Galbeta1-3GlcNAc) acceptors substrates. This chain is 4-galactosyl-N-acetylglucosaminide 3-alpha-L-fucosyltransferase FUT6, found in Pan troglodytes (Chimpanzee).